Consider the following 140-residue polypeptide: Cysteine protease inhibitor 6 (140 aa).

A disulfide bridge connects residues cysteine 103 and cysteine 109.

It belongs to the protease inhibitor I3 (leguminous Kunitz-type inhibitor) family.

The protein resides in the vacuole. Inhibitor of cysteine proteases. May protect the plant by inhibiting proteases of invading organisms. In Solanum tuberosum (Potato), this protein is Cysteine protease inhibitor 6.